A 55-amino-acid chain; its full sequence is Neurotoxin BmKX-A1-S31 (55 aa).

The first 23 residues, 1–23 (MKIFFAVLVILVLFSMLIWTAYG), serve as a signal peptide directing secretion. 3 disulfide bridges follow: cysteine 30/cysteine 45, cysteine 36/cysteine 50, and cysteine 39/cysteine 53.

Expressed by the venom gland.

It localises to the secreted. This Olivierus martensii (Manchurian scorpion) protein is Neurotoxin BmKX-A1-S31.